The primary structure comprises 756 residues: Polyribonucleotide nucleotidyltransferase (756 aa).

Mg(2+) contacts are provided by aspartate 492 and aspartate 498. The KH domain maps to proline 559–valine 618. The 75-residue stretch at glycine 628–glutamine 702 folds into the S1 motif domain. The tract at residues glycine 703–arginine 756 is disordered. A compositionally biased stretch (basic and acidic residues) spans proline 718 to arginine 756.

Belongs to the polyribonucleotide nucleotidyltransferase family. Mg(2+) is required as a cofactor.

It is found in the cytoplasm. The catalysed reaction is RNA(n+1) + phosphate = RNA(n) + a ribonucleoside 5'-diphosphate. Involved in mRNA degradation. Catalyzes the phosphorolysis of single-stranded polyribonucleotides processively in the 3'- to 5'-direction. In Nitratidesulfovibrio vulgaris (strain DSM 19637 / Miyazaki F) (Desulfovibrio vulgaris), this protein is Polyribonucleotide nucleotidyltransferase.